A 255-amino-acid polypeptide reads, in one-letter code: CCAAT/enhancer-binding protein delta (255 aa).

3 disordered regions span residues 1-42 (MTCA…AAPA), 91-121 (GGPARLGGPGPAPRPLKREPDWGDGDAPGSL), and 138-206 (PAAQ…QEMQ). A Glycyl lysine isopeptide (Lys-Gly) (interchain with G-Cter in SUMO) cross-link involves residue K107. Residues 141–161 (QPTPPASPDPPRRSPAPPAPG) show a composition bias toward pro residues. The segment covering 163-187 (ARDKAAGKRGPDRGSPEYRQRRERN) has biased composition (basic and acidic residues). The bZIP domain maps to 177–240 (SPEYRQRRER…AGLRRFFKQL (64 aa)). The tract at residues 181–208 (RQRRERNNIAVRKSRDKAKRRNQEMQQK) is basic motif. The leucine-zipper stretch occupies residues 212 to 240 (LSAENEKLQQRVEQLTRDLAGLRRFFKQL).

Belongs to the bZIP family. C/EBP subfamily. Binds DNA as a homodimer and as a heterodimer. Can form stable heterodimers with CEBPA, CEBPB and CEBPE. Directly interacts with SPI1/PU.1; this interaction does not affect DNA-binding properties of each partner. Interacts with PRDM16.

It localises to the nucleus. Functionally, transcription activator that recognizes two different DNA motifs: the CCAAT homology common to many promoters and the enhanced core homology common to many enhancers. Important transcription factor regulating the expression of genes involved in immune and inflammatory responses. Transcriptional activator that enhances IL6 transcription alone and as heterodimer with CEBPB. The protein is CCAAT/enhancer-binding protein delta (CEBPD) of Ovis aries (Sheep).